A 134-amino-acid polypeptide reads, in one-letter code: Large ribosomal subunit protein eL14z (134 aa).

It belongs to the eukaryotic ribosomal protein eL14 family.

The polypeptide is Large ribosomal subunit protein eL14z (RPL14A) (Arabidopsis thaliana (Mouse-ear cress)).